The primary structure comprises 130 residues: Ribosome-binding factor A (130 aa).

Positions arginine 111–arginine 130 are disordered.

It belongs to the RbfA family. Monomer. Binds 30S ribosomal subunits, but not 50S ribosomal subunits or 70S ribosomes.

It is found in the cytoplasm. In terms of biological role, one of several proteins that assist in the late maturation steps of the functional core of the 30S ribosomal subunit. Associates with free 30S ribosomal subunits (but not with 30S subunits that are part of 70S ribosomes or polysomes). Required for efficient processing of 16S rRNA. May interact with the 5'-terminal helix region of 16S rRNA. This is Ribosome-binding factor A from Xanthomonas euvesicatoria pv. vesicatoria (strain 85-10) (Xanthomonas campestris pv. vesicatoria).